Reading from the N-terminus, the 460-residue chain is Probable lipase C14C8.15 (460 aa).

Residues 1-16 are Cytoplasmic-facing; sequence MTLNGNIMKYCLEKGE. A helical; Signal-anchor for type II membrane protein transmembrane segment spans residues 17–37; the sequence is ILISFLLIALESMFRICTVIL. Residues 38–460 lie on the Lumenal side of the membrane; that stretch reads PSPLRNWFYE…LVDGVMNHTI (423 aa). Residue S214 is the Nucleophile of the active site. N-linked (GlcNAc...) asparagine glycosylation occurs at N308. Catalysis depends on charge relay system residues D382 and H408. An N-linked (GlcNAc...) asparagine glycan is attached at N457.

This sequence belongs to the AB hydrolase superfamily. Lipase family.

Its subcellular location is the golgi apparatus. It localises to the membrane. Probable lipase. The chain is Probable lipase C14C8.15 from Schizosaccharomyces pombe (strain 972 / ATCC 24843) (Fission yeast).